The following is a 337-amino-acid chain: Adenosine deaminase (337 aa).

Residues histidine 12 and histidine 14 each coordinate Zn(2+). Residues histidine 14, aspartate 16, and glycine 170 each coordinate substrate. A Zn(2+)-binding site is contributed by histidine 197. Catalysis depends on glutamate 200, which acts as the Proton donor. Aspartate 278 is a binding site for Zn(2+). Aspartate 279 is a substrate binding site.

The protein belongs to the metallo-dependent hydrolases superfamily. Adenosine and AMP deaminases family. Adenosine deaminase subfamily. Requires Zn(2+) as cofactor.

It carries out the reaction adenosine + H2O + H(+) = inosine + NH4(+). The catalysed reaction is 2'-deoxyadenosine + H2O + H(+) = 2'-deoxyinosine + NH4(+). In terms of biological role, catalyzes the hydrolytic deamination of adenosine and 2-deoxyadenosine. This Pectobacterium atrosepticum (strain SCRI 1043 / ATCC BAA-672) (Erwinia carotovora subsp. atroseptica) protein is Adenosine deaminase.